Reading from the N-terminus, the 735-residue chain is Ion-translocating oxidoreductase complex subunit C (735 aa).

4Fe-4S ferredoxin-type domains lie at 368-397 (MGAP…QQLY) and 407-436 (KATA…VQYF). [4Fe-4S] cluster contacts are provided by Cys-377, Cys-380, Cys-383, Cys-387, Cys-416, Cys-419, Cys-422, and Cys-426. The tract at residues 534 to 716 (QARAKQAAHP…ADPRKAAVAA (183 aa)) is disordered.

The protein belongs to the 4Fe4S bacterial-type ferredoxin family. RnfC subfamily. In terms of assembly, the complex is composed of six subunits: RsxA, RsxB, RsxC, RsxD, RsxE and RsxG. [4Fe-4S] cluster serves as cofactor.

Its subcellular location is the cell inner membrane. Part of a membrane-bound complex that couples electron transfer with translocation of ions across the membrane. Required to maintain the reduced state of SoxR. The sequence is that of Ion-translocating oxidoreductase complex subunit C from Salmonella agona (strain SL483).